We begin with the raw amino-acid sequence, 487 residues long: 3-octaprenyl-4-hydroxybenzoate carboxy-lyase (487 aa).

Asparagine 172 lines the Mn(2+) pocket. Residues 175–177, 189–191, and 194–195 contribute to the prenylated FMN site; these read IYR, RWL, and RG. Glutamate 238 serves as a coordination point for Mn(2+). The active-site Proton donor is the aspartate 287.

It belongs to the UbiD family. As to quaternary structure, homohexamer. The cofactor is prenylated FMN. Mn(2+) is required as a cofactor.

The protein resides in the cell membrane. It catalyses the reaction a 4-hydroxy-3-(all-trans-polyprenyl)benzoate + H(+) = a 2-(all-trans-polyprenyl)phenol + CO2. Its pathway is cofactor biosynthesis; ubiquinone biosynthesis. Functionally, catalyzes the decarboxylation of 3-octaprenyl-4-hydroxy benzoate to 2-octaprenylphenol, an intermediate step in ubiquinone biosynthesis. This Nitrosococcus oceani (strain ATCC 19707 / BCRC 17464 / JCM 30415 / NCIMB 11848 / C-107) protein is 3-octaprenyl-4-hydroxybenzoate carboxy-lyase.